Reading from the N-terminus, the 177-residue chain is Chorismate pyruvate-lyase (177 aa).

The substrate site is built by Met36, Arg78, Leu116, and Glu157.

It belongs to the UbiC family. In terms of assembly, monomer.

It is found in the cytoplasm. It carries out the reaction chorismate = 4-hydroxybenzoate + pyruvate. The protein operates within cofactor biosynthesis; ubiquinone biosynthesis. In terms of biological role, removes the pyruvyl group from chorismate, with concomitant aromatization of the ring, to provide 4-hydroxybenzoate (4HB) for the ubiquinone pathway. This chain is Chorismate pyruvate-lyase, found in Pectobacterium atrosepticum (strain SCRI 1043 / ATCC BAA-672) (Erwinia carotovora subsp. atroseptica).